A 624-amino-acid polypeptide reads, in one-letter code: Steryl-sulfatase (624 aa).

An N-terminal signal peptide occupies residues 1–22; it reads MPRPRPLLLAVMAATLADIILA. Residues 24–192 lie on the Lumenal side of the membrane; it reads DPAPAGPAPR…GTVFGPALRV (169 aa). 2 residues coordinate Ca(2+): Asp43 and Asp44. N-linked (GlcNAc...) asparagine glycosylation occurs at Asn55. Cys83 contributes to the Ca(2+) binding site. The active-site Nucleophile is Cys83. Residue Cys83 is modified to 3-oxoalanine (Cys). The active site involves His144. Intrachain disulfides connect Cys149–Cys156 and Cys178–Cys250. The chain crosses the membrane as a helical span at residues 193 to 216; that stretch reads FAAGPLAALGASLAAMAAARWAGL. The Cytoplasmic portion of the chain corresponds to 217–220; that stretch reads ARVP. The chain crosses the membrane as a helical span at residues 221–242; it reads GWALAGTAAAMLAVGGPRSASC. Residues 243–624 lie on the Lumenal side of the membrane; that stretch reads LGFRPANCFL…ATTRTQATPR (382 aa). Ca(2+) contacts are provided by Asp350 and His351. Cystine bridges form between Cys454/Cys495 and Cys487/Cys493. The N-linked (GlcNAc...) asparagine glycan is linked to Asn465. Residues 572–624 form a disordered region; it reads GGAGGGAGAQDDSGHAHGDGSHAHDDPGHAQDRGDDDAHYGGHATTRTQATPR. Over residues 583 to 611 the composition is skewed to basic and acidic residues; sequence DSGHAHGDGSHAHDDPGHAQDRGDDDAHY.

Belongs to the sulfatase family. Homodimer. The cofactor is Ca(2+). In terms of processing, the conversion to 3-oxoalanine (also known as C-formylglycine, FGly), of a serine or cysteine residue in prokaryotes and of a cysteine residue in eukaryotes, is critical for catalytic activity.

Its subcellular location is the microsome membrane. It localises to the endoplasmic reticulum membrane. The enzyme catalyses dehydroepiandrosterone 3-sulfate + H2O = 3beta-hydroxyandrost-5-en-17-one + sulfate + H(+). It catalyses the reaction estrone 3-sulfate + H2O = estrone + sulfate + H(+). Functionally, catalyzes the conversion of sulfated steroid precursors, such as dehydroepiandrosterone sulfate (DHEA-S) and estrone sulfate to the free steroid. The protein is Steryl-sulfatase (Sts) of Mus musculus (Mouse).